A 503-amino-acid polypeptide reads, in one-letter code: DnaJ homolog subfamily C member 3 (503 aa).

An N-terminal signal peptide occupies residues Met1 to Cys31. 9 TPR repeats span residues Val37–Asn70, Tyr71–Phe104, Thr105–Asn137, Leu153–Asp186, Ala187–Asn220, Thr221–His254, Leu267–Val300, Thr305–Asn338, and Val339–Asp372. Cys247 and Cys257 are joined by a disulfide. Cys312 and Cys328 form a disulfide bridge. Positions Gln374–Arg392 are flexible linker. Residues Asp393–Glu461 form the J domain.

It is found in the endoplasmic reticulum. In terms of biological role, may be involved in the unfolded protein response (UPR) during ER stress. The chain is DnaJ homolog subfamily C member 3 (DNAJC3) from Gallus gallus (Chicken).